The primary structure comprises 448 residues: U-box domain-containing protein 30 (448 aa).

A U-box domain is found at 63 to 137 (DIPSVFICPI…YTWFSQKYVL (75 aa)). 2 ARM repeats span residues 179-219 (LMAR…SLDL) and 221-260 (SDSK…GLVE).

It carries out the reaction S-ubiquitinyl-[E2 ubiquitin-conjugating enzyme]-L-cysteine + [acceptor protein]-L-lysine = [E2 ubiquitin-conjugating enzyme]-L-cysteine + N(6)-ubiquitinyl-[acceptor protein]-L-lysine.. It functions in the pathway protein modification; protein ubiquitination. Functionally, functions as an E3 ubiquitin ligase. In Arabidopsis thaliana (Mouse-ear cress), this protein is U-box domain-containing protein 30 (PUB30).